The following is a 443-amino-acid chain: Exodeoxyribonuclease 7 large subunit (443 aa).

The protein belongs to the XseA family. In terms of assembly, heterooligomer composed of large and small subunits.

It is found in the cytoplasm. The enzyme catalyses Exonucleolytic cleavage in either 5'- to 3'- or 3'- to 5'-direction to yield nucleoside 5'-phosphates.. Functionally, bidirectionally degrades single-stranded DNA into large acid-insoluble oligonucleotides, which are then degraded further into small acid-soluble oligonucleotides. This Vibrio campbellii (strain ATCC BAA-1116) protein is Exodeoxyribonuclease 7 large subunit.